The primary structure comprises 155 residues: Endoribonuclease YbeY (155 aa).

3 residues coordinate Zn(2+): histidine 114, histidine 118, and histidine 124.

This sequence belongs to the endoribonuclease YbeY family. Zn(2+) serves as cofactor.

Its subcellular location is the cytoplasm. Functionally, single strand-specific metallo-endoribonuclease involved in late-stage 70S ribosome quality control and in maturation of the 3' terminus of the 16S rRNA. The sequence is that of Endoribonuclease YbeY from Enterobacter sp. (strain 638).